The primary structure comprises 317 residues: Serpentine receptor class delta-46 (317 aa).

A run of 7 helical transmembrane segments spans residues 9-29, 42-62, 91-111, 129-149, 185-205, 239-259, and 269-289; these read FYII…YVII, IFLC…LLQA, YVLC…TMYV, VIIL…YLTI, QIVF…MFCL, AFLP…ALIT, and FVSV…FYTV.

This sequence belongs to the nematode receptor-like protein srd family.

The protein localises to the membrane. The protein is Serpentine receptor class delta-46 (srd-46) of Caenorhabditis elegans.